The sequence spans 2472 residues: Spectrin alpha chain, non-erythrocytic 1 (2472 aa).

The residue at position 1 (methionine 1) is an N-acetylmethionine. 9 Spectrin repeats span residues 45-146 (RFQF…IKLL), 150-251 (KLVQ…QGKL), 256-358 (EVQR…ARLD), 361-465 (YRLQ…QYEQ), 468-570 (DLQL…AQLA), 574-676 (HLQQ…KLRE), 679-781 (QQQQ…QKLA), 785-888 (RLQQ…DLED), and 891-961 (QAQQ…QQVA). Position 587 is a phosphoserine (serine 587). Lysine 637 carries the post-translational modification N6-acetyllysine. Lysine 803 carries the N6-acetyllysine modification. A phosphoserine mark is found at serine 924, serine 982, serine 999, serine 1029, serine 1031, and serine 1041. An SH3 domain is found at 967–1026 (TGKELVLALYDYQEKSPREVTMKKGDILTLLNSTNKDWWKVEVNDRQGFVPAAYVKKLDP). The Spectrin 10 repeat unit spans residues 1096-1166 (LFREANELQQ…LESEGLMAEE (71 aa)). At tyrosine 1176 the chain carries Phosphotyrosine. Serine 1190, serine 1207, serine 1217, serine 1291, serine 1306, serine 1323, and serine 1338 each carry phosphoserine. The Spectrin 11 repeat unit spans residues 1233 to 1336 (HEVQRFHRDA…RADQRKAKLG (104 aa)). Spectrin repeat units follow at residues 1339–1441 (HDLQ…RMML) and 1446–1549 (ELQL…KLGE). Lysine 1519 carries the N6-acetyllysine modification. Phosphoserine occurs at positions 1550, 1557, 1578, 1615, and 1647. Spectrin repeat units follow at residues 1552 to 1656 (TLQQ…KLKE), 1659 to 1762 (KQQN…KLSE), 1764 to 1868 (HRLH…RLEE), 1871 to 1974 (EYQQ…KLDE), 1978 to 2081 (FLQF…KLLE), 2092 to 2194 (LFLT…LELQ), and 2206 to 2310 (LRQE…NLEQ). The residue at position 2020 (threonine 2020) is a Phosphothreonine. Residue lysine 2052 is modified to N6-acetyllysine. A Phosphothreonine modification is found at threonine 2066. EF-hand domains are found at residues 2323–2358 (EALK…LGYD), 2366–2401 (EPDP…RETE), and 2404–2439 (KSSE…EQAD). Residues aspartate 2336, aspartate 2338, serine 2340, arginine 2342, glutamate 2347, aspartate 2379, asparagine 2381, aspartate 2383, histidine 2385, and glutamate 2390 each coordinate Ca(2+). Lysine 2421 bears the N6-acetyllysine mark.

This sequence belongs to the spectrin family. As to quaternary structure, like erythrocyte spectrin, the spectrin-like proteins are capable of forming dimers which can further associate to tetramers. Interacts (via C-terminal spectrin repeats) with TRPC4. Interacts with CALM and EMD. Interacts with isoform 1 of ACP1. Identified in a complex with ACTN4, CASK, IQGAP1, MAGI2, NPHS1 and SPTBN1. Interacts with SHANK3 (via ANK repeats). Interacts with CLN3; this interaction regulates the fodrin localization at the plasma membrane. Phosphorylation of Tyr-1176 decreases sensitivity to cleavage by calpain in vitro. In terms of tissue distribution, expressed in the foot process layer of podocytes in the kidney glomerulus and in tubules (at protein level).

It is found in the cytoplasm. It localises to the cytoskeleton. The protein resides in the cell cortex. Its function is as follows. Fodrin, which seems to be involved in secretion, interacts with calmodulin in a calcium-dependent manner and is thus candidate for the calcium-dependent movement of the cytoskeleton at the membrane. The polypeptide is Spectrin alpha chain, non-erythrocytic 1 (Sptan1) (Rattus norvegicus (Rat)).